We begin with the raw amino-acid sequence, 144 residues long: 3-dehydroquinate dehydratase (144 aa).

Catalysis depends on Tyr-22, which acts as the Proton acceptor. 3 residues coordinate substrate: Asn-71, His-77, and Asp-84. Residue His-97 is the Proton donor of the active site. Residues 98-99 (IS) and Arg-108 contribute to the substrate site.

The protein belongs to the type-II 3-dehydroquinase family. Homododecamer.

It catalyses the reaction 3-dehydroquinate = 3-dehydroshikimate + H2O. Its pathway is metabolic intermediate biosynthesis; chorismate biosynthesis; chorismate from D-erythrose 4-phosphate and phosphoenolpyruvate: step 3/7. Functionally, catalyzes a trans-dehydration via an enolate intermediate. The protein is 3-dehydroquinate dehydratase (aroQ) of Thermotoga maritima (strain ATCC 43589 / DSM 3109 / JCM 10099 / NBRC 100826 / MSB8).